The primary structure comprises 360 residues: UDP-N-acetylglucosamine--N-acetylmuramyl-(pentapeptide) pyrophosphoryl-undecaprenol N-acetylglucosamine transferase (360 aa).

Residues 14 to 16 (TGG), N131, R167, S195, I249, and Q294 contribute to the UDP-N-acetyl-alpha-D-glucosamine site.

Belongs to the glycosyltransferase 28 family. MurG subfamily.

Its subcellular location is the cell inner membrane. It carries out the reaction di-trans,octa-cis-undecaprenyl diphospho-N-acetyl-alpha-D-muramoyl-L-alanyl-D-glutamyl-meso-2,6-diaminopimeloyl-D-alanyl-D-alanine + UDP-N-acetyl-alpha-D-glucosamine = di-trans,octa-cis-undecaprenyl diphospho-[N-acetyl-alpha-D-glucosaminyl-(1-&gt;4)]-N-acetyl-alpha-D-muramoyl-L-alanyl-D-glutamyl-meso-2,6-diaminopimeloyl-D-alanyl-D-alanine + UDP + H(+). It participates in cell wall biogenesis; peptidoglycan biosynthesis. Cell wall formation. Catalyzes the transfer of a GlcNAc subunit on undecaprenyl-pyrophosphoryl-MurNAc-pentapeptide (lipid intermediate I) to form undecaprenyl-pyrophosphoryl-MurNAc-(pentapeptide)GlcNAc (lipid intermediate II). This chain is UDP-N-acetylglucosamine--N-acetylmuramyl-(pentapeptide) pyrophosphoryl-undecaprenol N-acetylglucosamine transferase, found in Polaromonas naphthalenivorans (strain CJ2).